The chain runs to 550 residues: CTP synthase (550 aa).

The amidoligase domain stretch occupies residues 1 to 272 (MKTKFIFITG…DQKITSFLNL (272 aa)). Ser14 is a CTP binding site. Ser14 contacts UTP. An ATP-binding site is contributed by 15-20 (SLGKGL). Tyr55 contributes to the L-glutamine binding site. Asp72 is a binding site for ATP. Residues Asp72 and Glu146 each coordinate Mg(2+). Residues 153 to 155 (DIE), 193 to 198 (KTKPTQ), and Lys229 contribute to the CTP site. UTP-binding positions include 193–198 (KTKPTQ) and Lys229. Residues 297–550 (TITIVGKYVG…IHAACNHNKQ (254 aa)) enclose the Glutamine amidotransferase type-1 domain. Gly359 provides a ligand contact to L-glutamine. The Nucleophile; for glutamine hydrolysis role is filled by Cys386. L-glutamine contacts are provided by residues 387-390 (LGMQ), Glu410, and Arg478. Active-site residues include His523 and Glu525.

This sequence belongs to the CTP synthase family. Homotetramer.

The enzyme catalyses UTP + L-glutamine + ATP + H2O = CTP + L-glutamate + ADP + phosphate + 2 H(+). It catalyses the reaction L-glutamine + H2O = L-glutamate + NH4(+). The catalysed reaction is UTP + NH4(+) + ATP = CTP + ADP + phosphate + 2 H(+). Its pathway is pyrimidine metabolism; CTP biosynthesis via de novo pathway; CTP from UDP: step 2/2. Allosterically activated by GTP, when glutamine is the substrate; GTP has no effect on the reaction when ammonia is the substrate. The allosteric effector GTP functions by stabilizing the protein conformation that binds the tetrahedral intermediate(s) formed during glutamine hydrolysis. Inhibited by the product CTP, via allosteric rather than competitive inhibition. Catalyzes the ATP-dependent amination of UTP to CTP with either L-glutamine or ammonia as the source of nitrogen. Regulates intracellular CTP levels through interactions with the four ribonucleotide triphosphates. This chain is CTP synthase, found in Lawsonia intracellularis (strain PHE/MN1-00).